We begin with the raw amino-acid sequence, 173 residues long: Dual-action ribosomal maturation protein DarP (173 aa).

Belongs to the DarP family.

Its subcellular location is the cytoplasm. Its function is as follows. Member of a network of 50S ribosomal subunit biogenesis factors which assembles along the 30S-50S interface, preventing incorrect 23S rRNA structures from forming. Promotes peptidyl transferase center (PTC) maturation. The protein is Dual-action ribosomal maturation protein DarP of Pseudomonas syringae pv. tomato (strain ATCC BAA-871 / DC3000).